A 776-amino-acid polypeptide reads, in one-letter code: Reticulon-1 (776 aa).

4 disordered regions span residues 1-101 (MAAP…KDGE), 137-168 (SESPEELGTPGPSLPDVPGIESRGLFSSDSGI), 205-245 (VKHQ…PAPV), and 285-580 (LTEI…APPP). S327 bears the Phosphoserine mark. A compositionally biased stretch (low complexity) spans 328-341 (PGSITPPSSGTEPS). Residues S350, S352, and S487 each carry the phosphoserine modification. Residues 497 to 511 (AIREETGVRAEERAP) show a composition bias toward basic and acidic residues. The Reticulon domain maps to 589-776 (AIDLLYWRDI…KIPGAKRHAE (188 aa)). The next 2 membrane-spanning stretches (helical) occupy residues 603–623 (IVFGSFLLLLFSLTQFSVVSV) and 705–725 (FAVLMWLLTYVGALFNGLTLL).

Interacts with NDRG1. Interacts with BACE1. As to quaternary structure, interacts with TMEM33. In terms of assembly, interacts with UGCG; regulates the ceramide glucosyltransferase activity of UGCG. In terms of processing, isoforms RTN1-A and RTN1-B are phosphorylated. As to expression, expressed in neural and neuroendocrine tissues and cell cultures derived therefrom. Expression of isoform RTN1-C is strongly correlated with neuronal differentiation.

The protein resides in the endoplasmic reticulum membrane. The protein localises to the golgi apparatus membrane. Functionally, inhibits amyloid precursor protein processing, probably by blocking BACE1 activity. The sequence is that of Reticulon-1 (RTN1) from Homo sapiens (Human).